A 172-amino-acid chain; its full sequence is Adenine phosphoribosyltransferase (172 aa).

Belongs to the purine/pyrimidine phosphoribosyltransferase family. Homodimer.

The protein resides in the cytoplasm. It catalyses the reaction AMP + diphosphate = 5-phospho-alpha-D-ribose 1-diphosphate + adenine. Its pathway is purine metabolism; AMP biosynthesis via salvage pathway; AMP from adenine: step 1/1. Catalyzes a salvage reaction resulting in the formation of AMP, that is energically less costly than de novo synthesis. The polypeptide is Adenine phosphoribosyltransferase (Malacoplasma penetrans (strain HF-2) (Mycoplasma penetrans)).